The sequence spans 226 residues: Urease accessory protein UreF (226 aa).

It belongs to the UreF family. In terms of assembly, ureD, UreF and UreG form a complex that acts as a GTP-hydrolysis-dependent molecular chaperone, activating the urease apoprotein by helping to assemble the nickel containing metallocenter of UreC. The UreE protein probably delivers the nickel.

The protein localises to the cytoplasm. Required for maturation of urease via the functional incorporation of the urease nickel metallocenter. The protein is Urease accessory protein UreF of Paraburkholderia phymatum (strain DSM 17167 / CIP 108236 / LMG 21445 / STM815) (Burkholderia phymatum).